A 105-amino-acid chain; its full sequence is Phosphoribosyl-ATP pyrophosphatase (105 aa).

Belongs to the PRA-PH family.

It localises to the cytoplasm. It carries out the reaction 1-(5-phospho-beta-D-ribosyl)-ATP + H2O = 1-(5-phospho-beta-D-ribosyl)-5'-AMP + diphosphate + H(+). Its pathway is amino-acid biosynthesis; L-histidine biosynthesis; L-histidine from 5-phospho-alpha-D-ribose 1-diphosphate: step 2/9. This Ruthia magnifica subsp. Calyptogena magnifica protein is Phosphoribosyl-ATP pyrophosphatase.